An 88-amino-acid polypeptide reads, in one-letter code: Putative membrane protein insertion efficiency factor (88 aa).

It belongs to the UPF0161 family.

The protein resides in the cell membrane. Could be involved in insertion of integral membrane proteins into the membrane. The sequence is that of Putative membrane protein insertion efficiency factor from Exiguobacterium sibiricum (strain DSM 17290 / CCUG 55495 / CIP 109462 / JCM 13490 / 255-15).